We begin with the raw amino-acid sequence, 516 residues long: Potassium voltage-gated channel subfamily A member 10 (516 aa).

A helical membrane pass occupies residues 223 to 244 (VALVSVLVIVISIIIFCMETLP). A glycan (N-linked (GlcNAc...) asparagine) is linked at Asn-261. The helical transmembrane segment at 276–296 (FFVIETACIIWFSFELFVRFI) threads the bilayer. Residues 308–328 (IMNIIDIVSIIPYFVTLTTEL) form a helical membrane-spanning segment. The N-linked (GlcNAc...) asparagine glycan is linked to Asn-339. A helical; Voltage-sensor membrane pass occupies residues 344 to 363 (ILRIIRLVRVFRIFKLSRHS). A helical transmembrane segment spans residues 380–400 (LGLLIFFLFIGVILFSSAVYF). The Selectivity filter signature appears at 426 to 431 (TVGYGD). The helical transmembrane segment at 441 to 461 (IVGTLCAIAGVLTIALPVPVI) threads the bilayer. Asn-503 carries an N-linked (GlcNAc...) asparagine glycan.

Belongs to the potassium channel family. A (Shaker) (TC 1.A.1.2) subfamily. Kv1.8/KCNA10 sub-subfamily. In terms of assembly, homotetramer. As to expression, detected in brain, cochlear sensory epithelium, cochlear ganglion, tegumentum vasculosum. Detected at low levels in cochlear lagena.

Its subcellular location is the membrane. The enzyme catalyses K(+)(in) = K(+)(out). With respect to regulation, the channel activity is up-regulated by cAMP. Functionally, voltage-gated potassium ion channel that mediates K(+) permeability of excitable membranes. When opened in response to the voltage difference across the membrane, KCNA10 channel selectively allows the flow of potassium ions across the membrane down their electrochemical gradient. The polypeptide is Potassium voltage-gated channel subfamily A member 10 (KCNA10) (Gallus gallus (Chicken)).